A 292-amino-acid polypeptide reads, in one-letter code: Homoserine kinase (292 aa).

Position 84-94 (84-94) interacts with ATP; it reads PLSRGLGSSSA.

This sequence belongs to the GHMP kinase family. Homoserine kinase subfamily.

It localises to the cytoplasm. It carries out the reaction L-homoserine + ATP = O-phospho-L-homoserine + ADP + H(+). It participates in amino-acid biosynthesis; L-threonine biosynthesis; L-threonine from L-aspartate: step 4/5. Catalyzes the ATP-dependent phosphorylation of L-homoserine to L-homoserine phosphate. This chain is Homoserine kinase, found in Campylobacter jejuni subsp. jejuni serotype O:2 (strain ATCC 700819 / NCTC 11168).